Here is a 188-residue protein sequence, read N- to C-terminus: Large ribosomal subunit protein eL18 (188 aa).

Lys119 participates in a covalent cross-link: Glycyl lysine isopeptide (Lys-Gly) (interchain with G-Cter in SUMO2). Residue Ser130 is modified to Phosphoserine. The disordered stretch occupies residues 151–188 (HFGKAPGTPHSHTKPYVRSKGRKFERARGRRASRGYKN). Thr158 is subject to Phosphothreonine. 2 stretches are compositionally biased toward basic residues: residues 161-171 (SHTKPYVRSKG) and 178-188 (RGRRASRGYKN). A Glycyl lysine isopeptide (Lys-Gly) (interchain with G-Cter in SUMO2) cross-link involves residue Lys164.

It belongs to the eukaryotic ribosomal protein eL18 family. In terms of assembly, component of the large ribosomal subunit.

The protein localises to the cytoplasm. Its subcellular location is the cytosol. The protein resides in the rough endoplasmic reticulum. Component of the large ribosomal subunit. The ribosome is a large ribonucleoprotein complex responsible for the synthesis of proteins in the cell. The polypeptide is Large ribosomal subunit protein eL18 (RPL18) (Homo sapiens (Human)).